Here is a 162-residue protein sequence, read N- to C-terminus: NADH-quinone oxidoreductase subunit C (162 aa).

It belongs to the complex I 30 kDa subunit family. NDH-1 is composed of 14 different subunits. Subunits NuoB, C, D, E, F, and G constitute the peripheral sector of the complex.

It localises to the cell inner membrane. It catalyses the reaction a quinone + NADH + 5 H(+)(in) = a quinol + NAD(+) + 4 H(+)(out). Its function is as follows. NDH-1 shuttles electrons from NADH, via FMN and iron-sulfur (Fe-S) centers, to quinones in the respiratory chain. The immediate electron acceptor for the enzyme in this species is believed to be ubiquinone. Couples the redox reaction to proton translocation (for every two electrons transferred, four hydrogen ions are translocated across the cytoplasmic membrane), and thus conserves the redox energy in a proton gradient. This is NADH-quinone oxidoreductase subunit C from Geobacter sulfurreducens (strain ATCC 51573 / DSM 12127 / PCA).